Consider the following 426-residue polypeptide: MMSGRMNAAGDESPFPFGAMQAPGPGAYVGFDHGAAAVAAAAAAAQRAGMLQHHHHHMYDGLDFAAAMQFGGGQDAPPHPQLLALPPSMAAPPPPPMPMPLQMPMTMPMPGDVYPALGIVKREGGGGGQDAAAGRIGLNLGRRTYFSPGDMLAVDRLLMRSRLGGVFGLGFGGAHHQPPRCQAEGCKADLSGAKHYHRRHKVCEYHAKASVVAASGKQQRFCQQCSRFHVLTEFDEAKRSCRKRLAEHNRRRRKPAAAATTAVAAAKDAAAAPVAAGKKPSGGAATSYTGDNKNVVSMSAAKSPISSNTSVISCLPEQGKHAAAAARPTALTLGGAPPHESSAPQIGAMLHHHHHHQQDHMQVSSLVHINGGGGGGSNNILSCSSVCSSALPSTATNGEVSDQNNDNSHNNGGNNNNMHLFEVDFM.

The segment at 178-255 (PPRCQAEGCK…AEHNRRRRKP (78 aa)) adopts an SBP-type zinc-finger fold. 8 residues coordinate Zn(2+): Cys-181, Cys-186, Cys-203, His-206, Cys-222, Cys-225, His-229, and Cys-241. The Bipartite nuclear localization signal motif lies at 238–254 (KRSCRKRLAEHNRRRRK). Composition is skewed to low complexity over residues 268 to 287 (DAAA…AATS) and 401 to 417 (SDQN…NNNN). 2 disordered regions span residues 268–290 (DAAA…SYTG) and 392–426 (PSTA…VDFM).

In terms of tissue distribution, expressed in stems, leaf sheaths, and young panicles.

Its subcellular location is the nucleus. Functionally, trans-acting factor that binds specifically to the consensus nucleotide sequence 5'-TNCGTACAA-3'. In Oryza sativa subsp. indica (Rice), this protein is Squamosa promoter-binding-like protein 10 (SPL10).